Here is a 436-residue protein sequence, read N- to C-terminus: Testican-3 (436 aa).

Positions 1–21 (MLKVSAVLCVCAAAWCSQSLA) are cleaved as a signal peptide. Intrachain disulfides connect Cys-90–Cys-101, Cys-95–Cys-111, Cys-139–Cys-169, Cys-142–Cys-162, Cys-151–Cys-183, Cys-317–Cys-341, Cys-352–Cys-359, and Cys-361–Cys-380. One can recognise a Kazal-like domain in the interval 133–185 (GPILSTCKQCPVVYPSPVCGSDGHTYSFQCKLEYQACVLGKQISVKCEGHCPC). Residues 314–380 (DPPCQTELSN…GSRINGVADC (67 aa)) form the Thyroglobulin type-1 domain. Ser-387 and Ser-392 each carry an O-linked (Xyl...) (glycosaminoglycan) serine glycan. Positions 393-436 (GDFHEWTDDEDDEDDIMNDEDEIEDDDEDEGDDDDGGDDHDVYI) are disordered. Residues 399 to 430 (TDDEDDEDDIMNDEDEIEDDDEDEGDDDDGGD) show a composition bias toward acidic residues.

In terms of processing, contains chondroitin sulfate and heparan sulfate O-linked oligosaccharides. Expressed in brain.

It is found in the secreted. The protein resides in the extracellular space. The protein localises to the extracellular matrix. In terms of biological role, may participate in diverse steps of neurogenesis. Inhibits the processing of pro-matrix metalloproteinase 2 (MMP-2) by MT1-MMP and MT3-MMP. May interfere with tumor invasion. This Homo sapiens (Human) protein is Testican-3 (SPOCK3).